The sequence spans 433 residues: D-amino acid dehydrogenase (433 aa).

3–17 (VLVLGSGVIGTTSAY) provides a ligand contact to FAD.

It belongs to the DadA oxidoreductase family. FAD is required as a cofactor.

It catalyses the reaction a D-alpha-amino acid + A + H2O = a 2-oxocarboxylate + AH2 + NH4(+). Its pathway is amino-acid degradation; D-alanine degradation; NH(3) and pyruvate from D-alanine: step 1/1. Oxidative deamination of D-amino acids. The chain is D-amino acid dehydrogenase from Pseudomonas savastanoi pv. phaseolicola (strain 1448A / Race 6) (Pseudomonas syringae pv. phaseolicola (strain 1448A / Race 6)).